The following is a 241-amino-acid chain: 15,16-dihydrobiliverdin:ferredoxin oxidoreductase (241 aa).

Belongs to the HY2 family.

The catalysed reaction is 15,16-dihydrobiliverdin + oxidized 2[4Fe-4S]-[ferredoxin] = biliverdin IXalpha + reduced 2[4Fe-4S]-[ferredoxin] + 2 H(+). Its function is as follows. Catalyzes the two-electron reduction of biliverdin IX-alpha at the C15 methine bridge. The protein is 15,16-dihydrobiliverdin:ferredoxin oxidoreductase (pebA) of Prochlorococcus marinus (strain SARG / CCMP1375 / SS120).